Consider the following 69-residue polypeptide: MKAIISLLLISAMVFSMFEAVPVRRRFTAFEGERGCLPHNRFCNALSGPRCCTGLKCKELSIWDSRCLG.

An N-terminal signal peptide occupies residues 1–20; it reads MKAIISLLLISAMVFSMFEA. Residues 21–34 constitute a propeptide that is removed on maturation; the sequence is VPVRRRFTAFEGER. Cystine bridges form between C36-C52, C43-C57, and C51-C67. Residue L68 is modified to Leucine amide.

It belongs to the neurotoxin 01 (U2-agtx) family. As to expression, expressed by the venom gland.

The protein resides in the secreted. In terms of biological role, insect active toxin causing rapid but reversible paralysis in crickets. No activity shown in mammals. Does not show effect on mammalian voltage-gated calcium channels. This Agelena orientalis (Funnel-web spider) protein is U2-agatoxin-Ao1o.